The following is a 360-amino-acid chain: uncharacterized protein (360 aa).

An NAD(+)-binding site is contributed by 4 to 22 (KVLHIGAGGFGERWCDTFL).

In terms of biological role, could be a NAD-dependent oxidoreductase. This is an uncharacterized protein from Sinorhizobium fredii (strain NBRC 101917 / NGR234).